The sequence spans 760 residues: 5-methyltetrahydropteroyltriglutamate--homocysteine methyltransferase (760 aa).

5-methyltetrahydropteroyltri-L-glutamate is bound by residues Arg24–Lys27 and Lys118. L-homocysteine is bound by residues Ile437–Ser439 and Glu490. Residues Ile437–Ser439 and Glu490 contribute to the L-methionine site. 5-methyltetrahydropteroyltri-L-glutamate-binding positions include Arg521 to Cys522 and Trp567. Asp605 contributes to the L-homocysteine binding site. Asp605 contributes to the L-methionine binding site. Glu611 contacts 5-methyltetrahydropteroyltri-L-glutamate. His647, Cys649, and Glu671 together coordinate Zn(2+). The Proton donor role is filled by His700. Cys732 is a binding site for Zn(2+).

It belongs to the vitamin-B12 independent methionine synthase family. Zn(2+) serves as cofactor.

The enzyme catalyses 5-methyltetrahydropteroyltri-L-glutamate + L-homocysteine = tetrahydropteroyltri-L-glutamate + L-methionine. It participates in amino-acid biosynthesis; L-methionine biosynthesis via de novo pathway; L-methionine from L-homocysteine (MetE route): step 1/1. Its function is as follows. Catalyzes the transfer of a methyl group from 5-methyltetrahydrofolate to homocysteine resulting in methionine formation. The sequence is that of 5-methyltetrahydropteroyltriglutamate--homocysteine methyltransferase from Mycobacterium leprae (strain TN).